We begin with the raw amino-acid sequence, 352 residues long: Heat-inducible transcription repressor HrcA (352 aa).

Belongs to the HrcA family.

In terms of biological role, negative regulator of class I heat shock genes (grpE-dnaK-dnaJ and groELS operons). Prevents heat-shock induction of these operons. The polypeptide is Heat-inducible transcription repressor HrcA (Thermosynechococcus vestitus (strain NIES-2133 / IAM M-273 / BP-1)).